A 1998-amino-acid chain; its full sequence is Histone acetyltransferase KAT6A (1998 aa).

The 77-residue stretch at 1–77 (MVKLANPLYT…LNSYKDPDNP (77 aa)) folds into the SAMD1-like winged helix (WH) domain. Residues 1-144 (MVKLANPLYT…CGGTAASGFH (144 aa)) are required for activation of RUNX1-1. The required for nuclear localization stretch occupies residues 52–166 (ELSVKDGTIL…HGRLLKDGPL (115 aa)). Residues 72–93 (KDPDNPGRIALPKPRNHGKLDN) are disordered. In terms of domain architecture, H15 spans 95-171 (QSVDWNKLLK…KDGPLYRLNT (77 aa)). Residues 144 to 662 (HQQLRLAIKR…RKGYGRFLID (519 aa)) are interaction with PML. Lys-172 is modified (N6-acetyllysine). PHD-type zinc fingers lie at residues 199 to 258 (DKPV…LRWQ) and 255 to 306 (LRWQ…GMWI). The tract at residues 312-662 (PRKKGRKLLQ…RKGYGRFLID (351 aa)) is interaction with RUNX1-1. The interval 336 to 377 (GRPKNRLKKQSTVSKGPFSKVRTGPGRGRKRKITVSSQSASS) is disordered. N6-acetyllysine is present on residues Lys-350 and Lys-355. Thr-369 bears the Phosphothreonine; by PKB/AKT1 mark. A Phosphoserine modification is found at Ser-419. The disordered stretch occupies residues 440 to 464 (KGNRKSSTSHWPTDNQDGWESKQES). A compositionally biased stretch (polar residues) spans 444–457 (KSSTSHWPTDNQDG). Ser-471 bears the Phosphoserine mark. Residues 486 to 776 (IQEQALQKVG…VDPECLRWTP (291 aa)) form a catalytic region. Residues 502–776 (PQVRCPSVIE…VDPECLRWTP (275 aa)) form the MYST-type HAT domain. Positions 505–808 (RCPSVIEFGK…EPQGQERELE (304 aa)) are mediates interaction with BRPF1, required for histone H3 acetyltransferase activity. Residues 535–560 (LYLCEFCLKYMKSRTILQQHMKKCGW) form a C2HC MYST-type zinc finger. Lys-602 carries the post-translational modification N6-acetyllysine; by autocatalysis. Acetyl-CoA is bound by residues 643–647 (SCIMI) and 652–658 (QRKGYGR). Glu-678 (proton donor/acceptor) is an active-site residue. Ser-682 is a binding site for acetyl-CoA. Positions 783-947 (VVSEEEDEEA…RFSESADLWR (165 aa)) are disordered. At Ser-785 the chain carries Phosphoserine. A compositionally biased stretch (acidic residues) spans 785 to 797 (SEEEDEEADDGEK). Residues 798-840 (EEPQGQERELETRERVGKSVSRENKDQDSSSLIESEKKPEVKE) are compositionally biased toward basic and acidic residues. N6-acetyllysine is present on Lys-815. Residue Lys-835 forms a Glycyl lysine isopeptide (Lys-Gly) (interchain with G-Cter in SUMO2) linkage. Residues 865-874 (RRGRCGRKNR) are compositionally biased toward basic residues. Residues 875–886 (KTQERFGDKDSK) are compositionally biased toward basic and acidic residues. Position 900 is a phosphotyrosine (Tyr-900). Residues 903–916 (CEEKSAASRERYTE) are compositionally biased toward basic and acidic residues. Ser-940 and Ser-953 each carry phosphoserine. The disordered stretch occupies residues 982-1079 (GFSESSEEEE…EEEEDENELF (98 aa)). The residue at position 1006 (Lys-1006) is an N6-acetyllysine. Basic residues predominate over residues 1008 to 1029 (TLKRKKPILHRRRRVRKRKHHN). Positions 1030-1041 (SSVVTETISETT) are enriched in low complexity. Composition is skewed to acidic residues over residues 1042–1052 (EVLDEPFEDSD) and 1064–1077 (FEIEEEEEEEDENE). Phosphoserine is present on residues Ser-1088, Ser-1089, and Ser-1114. 4 disordered regions span residues 1096–1175 (QASS…PGFK), 1195–1436 (PIKP…EGAY), 1450–1567 (QSYT…STMG), and 1630–1702 (TCVV…CSMN). Positions 1106 to 1119 (DEEEEEEESDDADD) are enriched in acidic residues. Polar residues predominate over residues 1135–1146 (NSASLEPDTSTP). The segment covering 1147–1173 (MKKKKGWPKGKSRKPIHWKKRPGRKPG) has biased composition (basic residues). Residues 1203 to 1228 (RTQESEELVEVKEGLVEERKEEMHTE) show a composition bias toward basic and acidic residues. 2 stretches are compositionally biased toward acidic residues: residues 1229-1240 (ADEEAEEEEDAA) and 1281-1298 (EEPQELEEQEQEEEDEVT). Composition is skewed to basic and acidic residues over residues 1316-1333 (HLDSLKTKEPEGQPARED), 1351-1360 (DSRENAKDKD), and 1392-1413 (DSNTKEELIELKEEEEIPHSEL). Residues 1472–1496 (HNSPISSIPSHPSQSVRSVSSPSMP) show a composition bias toward low complexity. The segment covering 1501–1522 (GYTQISPEQGSLSAPSMQNMET) has biased composition (polar residues). Positions 1510 to 1635 (GSLSAPSMQN…KSPQTCVVER (126 aa)) are interaction with RUNX1-2. Positions 1510–1735 (GSLSAPSMQN…YERIPGDFGA (226 aa)) are interaction with PML. Residues 1527-1541 (DVPSVSDHSQQVVDS) are compositionally biased toward low complexity. Over residues 1549–1567 (IESTTENYENPSSYDSTMG) the composition is skewed to polar residues. Composition is skewed to pro residues over residues 1639-1658 (NQQPPPPPPPPPPPQQPQPQ) and 1665-1693 (PQPPPPQPQQQPPPPPQQQPQPPPPPQQQ). Positions 1907-1942 (SMNMNTLNAMNSYRMTQPMMNSSYHSNPAYMNQTAQ) are required for activation of RUNX1-2.

This sequence belongs to the MYST (SAS/MOZ) family. Component of the MOZ/MORF complex composed at least of ING5, KAT6A, KAT6B, MEAF6 and one of BRPF1, BRD1/BRPF2 and BRPF3. Interacts with RUNX1; phosphorylation of RUNX1 enhances the interaction. Interacts with RUNX2. Interacts with p53/TP53. Interacts with PML and this interaction positively regulates its acetylation activity towards p53/TP53. Post-translationally, autoacetylated. Autoacetylation at Lys-602 is required for proper function. In terms of processing, phosphorylation at Thr-369 by PKB/AKT1 inhibits its interaction with PML and negatively regulates its acetylation activity towards p53/TP53.

The protein localises to the nucleus. It is found in the nucleolus. The protein resides in the nucleoplasm. Its subcellular location is the PML body. The catalysed reaction is L-lysyl-[protein] + acetyl-CoA = N(6)-acetyl-L-lysyl-[protein] + CoA + H(+). Its function is as follows. Histone acetyltransferase that acetylates lysine residues in histone H3 and histone H4 (in vitro). Component of the MOZ/MORF complex which has a histone H3 acetyltransferase activity. May act as a transcriptional coactivator for RUNX1 and RUNX2. Acetylates p53/TP53 at 'Lys-120' and 'Lys-382' and controls its transcriptional activity via association with PML. This Rattus norvegicus (Rat) protein is Histone acetyltransferase KAT6A (Kat6a).